A 285-amino-acid chain; its full sequence is 4-diphosphocytidyl-2-C-methyl-D-erythritol kinase (285 aa).

Lys-11 is a catalytic residue. 95–105 (PVAAGIGGGSA) provides a ligand contact to ATP. Residue Asp-137 is part of the active site.

The protein belongs to the GHMP kinase family. IspE subfamily.

The enzyme catalyses 4-CDP-2-C-methyl-D-erythritol + ATP = 4-CDP-2-C-methyl-D-erythritol 2-phosphate + ADP + H(+). The protein operates within isoprenoid biosynthesis; isopentenyl diphosphate biosynthesis via DXP pathway; isopentenyl diphosphate from 1-deoxy-D-xylulose 5-phosphate: step 3/6. Its function is as follows. Catalyzes the phosphorylation of the position 2 hydroxy group of 4-diphosphocytidyl-2C-methyl-D-erythritol. The chain is 4-diphosphocytidyl-2-C-methyl-D-erythritol kinase from Paramagnetospirillum magneticum (strain ATCC 700264 / AMB-1) (Magnetospirillum magneticum).